Here is a 1427-residue protein sequence, read N- to C-terminus: ATP-binding cassette transporter abc1 (1427 aa).

A helical membrane pass occupies residues 26 to 46 (LLLFYLSLFSLTNLFLIQKLF). Asparagine 49 carries N-linked (GlcNAc...) asparagine glycosylation. 9 consecutive transmembrane segments (helical) span residues 63–83 (CLLE…SFYL), 87–107 (AVWW…NILS), 115–135 (LFSW…LISI), 155–175 (LLLP…PLFF), 197–217 (CSIF…WKSW), 262–282 (ILLM…TPLA), 298–318 (GNSP…ASVV), 345–367 (VLTS…YVYN), and 397–417 (MYFL…LAIL). Positions 262–549 (ILLMVFLSVL…LASVSRQFIQ (288 aa)) constitute an ABC transmembrane type-1 1 domain. The N-linked (GlcNAc...) asparagine glycan is linked to asparagine 437. Transmembrane regions (helical) follow at residues 489 to 509 (IIFK…TFAI) and 513 to 533 (IMGH…FGLL). Asparagine 567, asparagine 581, and asparagine 601 each carry an N-linked (GlcNAc...) asparagine glycan. The ABC transporter 1 domain maps to 579–807 (FENTSLSWSP…PSTFFSSNTK (229 aa)). Residues 609–629 (FTLVVGSTGSGKSTLAMALLG) form a helical membrane-spanning segment. 614 to 621 (GSTGSGKS) is a binding site for ATP. 2 N-linked (GlcNAc...) asparagine glycosylation sites follow: asparagine 658 and asparagine 703. A helical transmembrane segment spans residues 760–780 (IILFTHNVSLCLPIAENVIVL). Asparagine 782 and asparagine 842 each carry an N-linked (GlcNAc...) asparagine glycan. Residues 862 to 1142 (ILGSILLVMM…FVRANNEILT (281 aa)) form the ABC transmembrane type-1 2 domain. Helical transmembrane passes span 866–886 (ILLV…IALW), 896–916 (LPSS…YFLM), and 973–993 (LLWA…ITML). The N-linked (GlcNAc...) asparagine glycan is linked to asparagine 994. The next 3 helical transmembrane spans lie at 995-1015 (VTLV…LVYL), 1086-1106 (LAIR…LIAL), and 1114-1134 (GLVG…LVFV). Residues asparagine 1161 and asparagine 1184 are each glycosylated (N-linked (GlcNAc...) asparagine). Positions 1180–1422 (VSIKNLTVSY…RRAFWKMCKE (243 aa)) constitute an ABC transporter 2 domain. Residue 1214–1221 (GRTGSGKS) coordinates ATP. Residues 1223 to 1243 (MGLTLLRFTMIMSGAVEVDGI) form a helical membrane-spanning segment. Asparagine 1324 is a glycosylation site (N-linked (GlcNAc...) asparagine).

Belongs to the ABC transporter superfamily. ABCC family. Conjugate transporter (TC 3.A.1.208) subfamily.

It localises to the membrane. This is ATP-binding cassette transporter abc1 (abc1) from Schizosaccharomyces pombe (strain 972 / ATCC 24843) (Fission yeast).